We begin with the raw amino-acid sequence, 308 residues long: CASP-like protein 4A2 (308 aa).

Residues 1 to 135 are disordered; that stretch reads MALEAQPSPS…APAPAPRVPA (135 aa). The Cytoplasmic segment spans residues 1–161; that stretch reads MALEAQPSPS…KRPTAVLQRT (161 aa). Residues 22-31 show a composition bias toward gly residues; that stretch reads GGAGAPGGSA. Low complexity predominate over residues 32 to 44; the sequence is GDADAQARRATSG. 2 stretches are compositionally biased toward pro residues: residues 54–65 and 89–132; these read RRSPPPPFPRTP and FQPP…PAPR. Residues 162-182 traverse the membrane as a helical segment; the sequence is ALVARVAAALLCLAALAVLAA. The Extracellular portion of the chain corresponds to 183 to 203; that stretch reads DSRKGFALDSYSNYSQLRYSE. The N-linked (GlcNAc...) asparagine glycan is linked to asparagine 195. A helical membrane pass occupies residues 204–224; it reads AVNVIGFVYSVLQFFVLADLM. Topologically, residues 225–240 are cytoplasmic; the sequence is RRNKHLNPRRKGDYFD. A helical membrane pass occupies residues 241 to 262; that stretch reads FFMDQVLAYLLISSSSSATARV. At 263–280 the chain is on the extracellular side; the sequence is GDWIDNWGSDPFPKMANS. A glycan (N-linked (GlcNAc...) asparagine) is linked at asparagine 279. The chain crosses the membrane as a helical span at residues 281-301; it reads SIAISFMAFLVFAISALISAY. Residues 302-308 are Cytoplasmic-facing; sequence NLFRRDI.

This sequence belongs to the Casparian strip membrane proteins (CASP) family. Homodimer and heterodimers.

It localises to the cell membrane. In Oryza sativa subsp. japonica (Rice), this protein is CASP-like protein 4A2.